Reading from the N-terminus, the 159-residue chain is Cytochrome c-type biogenesis CcmH-like mitochondrial protein (159 aa).

Residues 1–82 lie on the Mitochondrial intermembrane side of the membrane; sequence MEKTDEERKK…ETVLYAPKFD (82 aa). Heme contacts are provided by Cys-27 and Cys-30. The chain crosses the membrane as a helical span at residues 83 to 105; sequence LQTAALWLTPVIIAGGTAAGIVY. The Mitochondrial matrix segment spans residues 106–159; the sequence is QKHRLRKNVDIMALNLIRGVPLTPKERVTILDVLIPPSPPPQGVVSRLRRWLNR.

Belongs to the CcmH/CycL/Ccl2/NrfF family. In terms of assembly, interacts (via N-terminus) with CYTC-1. Interacts with CCMFN1 and CCMFN2.

The protein localises to the mitochondrion inner membrane. Plays a central role in mitochondrial cytochrome c maturation. Probable component of a heme lyase complex involved in the reduction of apocytochrome c. Forms a complex with CCMF proteins (CCMFC, CCMFN1 and CCMFN2) that performs the assembly of heme with c-type apocytochromes in mitochondria. This Arabidopsis thaliana (Mouse-ear cress) protein is Cytochrome c-type biogenesis CcmH-like mitochondrial protein.